A 504-amino-acid chain; its full sequence is ATP synthase subunit alpha (504 aa).

Position 169-176 (169-176 (GDRGTGKT)) interacts with ATP.

It belongs to the ATPase alpha/beta chains family. In terms of assembly, F-type ATPases have 2 components, CF(1) - the catalytic core - and CF(0) - the membrane proton channel. CF(1) has five subunits: alpha(3), beta(3), gamma(1), delta(1), epsilon(1). CF(0) has three main subunits: a(1), b(2) and c(9-12). The alpha and beta chains form an alternating ring which encloses part of the gamma chain. CF(1) is attached to CF(0) by a central stalk formed by the gamma and epsilon chains, while a peripheral stalk is formed by the delta and b chains.

Its subcellular location is the cell inner membrane. It catalyses the reaction ATP + H2O + 4 H(+)(in) = ADP + phosphate + 5 H(+)(out). Functionally, produces ATP from ADP in the presence of a proton gradient across the membrane. The alpha chain is a regulatory subunit. This is ATP synthase subunit alpha from Leptospira biflexa serovar Patoc (strain Patoc 1 / Ames).